We begin with the raw amino-acid sequence, 152 residues long: MKVILTKDSKYGKENAIIEVADGYAKNFLIPKGFAMAYSQDNLKIREQKLSDLSALEHEKRSKARELQKQIEELSLMFTLDAAIDKAQNLHVHGSVSTKELKTKLLEHKIKLHDHAIQHVHLNVEGTHVVEVSLYKDIKAKLRVNLHINVKK.

Belongs to the bacterial ribosomal protein bL9 family.

Its function is as follows. Binds to the 23S rRNA. This is Large ribosomal subunit protein bL9 from Mycoplasmopsis synoviae (strain 53) (Mycoplasma synoviae).